The chain runs to 494 residues: Transcription factor SOX-9 (494 aa).

2 disordered regions span residues 1-66 and 159-275; these read MNLL…ESDE and ERLR…FRDV. Over residues 27-42 the composition is skewed to low complexity; sequence SDDSAGSPCPSGSGSD. Basic and acidic residues-rich tracts occupy residues 56-66 and 159-174; these read GDPDLKKESDE and ERLR…DYKY. A dimerization (DIM) region spans residues 63–103; sequence ESDEDKFPVCIREAVSQVLKGYDWTLVPMPVRVNGSSKNKP. Residues 63-103 are PQA; sequence ESDEDKFPVCIREAVSQVLKGYDWTLVPMPVRVNGSSKNKP. Phosphoserine is present on Ser64. Positions 105–173 form a DNA-binding region, HMG box; sequence VKRPMNAFMV…QHKKDHPDYK (69 aa). Residue Ser181 is modified to Phosphoserine. The span at 211-222 shows a compositional bias: low complexity; that stretch reads SPQSSSSISEVH. The interval 224–309 is transactivation domain (TAM); it reads PGEHSGQSQG…LPPNGHPGVP (86 aa). 2 short sequence motifs (9aaTAD) span residues 277-286 and 292-300; these read IGELSSDVIS and DVNEFDQYL. Low complexity predominate over residues 326 to 337; sequence SSASSPAGAGHA. A disordered region spans residues 326–402; that stretch reads SSASSPAGAG…PQQQQQQQQQ (77 aa). Residues 344 to 353 show a composition bias toward pro residues; the sequence is PQPPQPPAQP. The transactivation domain (TAC) stretch occupies residues 372 to 494; sequence RPHIKTEQLS…QPVYTQLTRP (123 aa). Lys376 is covalently cross-linked (Glycyl lysine isopeptide (Lys-Gly) (interchain with G-Cter in SUMO)). Polar residues predominate over residues 378–387; that stretch reads EQLSPSHYSE. Over residues 388-402 the composition is skewed to low complexity; that stretch reads QQQHSPQQQQQQQQQ. A 9aaTAD 3 motif is present at residues 445-453; it reads GGLYSTFTY. A disordered region spans residues 462 to 494; it reads YTPIADTSGVPSIPQTHSPQHWEQPVYTQLTRP. The segment covering 470-494 has biased composition (polar residues); the sequence is GVPSIPQTHSPQHWEQPVYTQLTRP.

As to quaternary structure, interacts with SNAI2; triggers neural crest delamination in a phosphorylation dependent manner. Interacts with UBE2I. In terms of processing, phosphorylated at Ser-181 in the developing neural tube. Phosphorylation at either Ser-64 or Ser-181 is required for sumoylation, but phosphorylation is not dependent on sumoylation. Sumoylation is enhanced by PKA. Phosphorylation is required for interaction with SNAI2 to trigger neural crest delamination and for an efficient trunk neural crest delamination, whereas sumoylation plays a less significant role. Phosphorylation and sumoylation are induced by BMP signaling pathway. Sumoylated at Lys-376; phosphorylation at either Ser-64 or Ser-181 is required for sumoylation. Sumoylation is induced by BMP signaling pathway.

The protein localises to the nucleus. In terms of biological role, transcription factor that plays a key role in chondrocytes differentiation and skeletal development. Specifically binds the 5'-ACAAAG-3' DNA motif present in enhancers and super-enhancers and promotes expression of genes important for chondrogenesis, including COL2A1. Plays a central role in successive steps of chondrocyte differentiation. Absolutely required for precartilaginous condensation, the first step in chondrogenesis during which skeletal progenitors differentiate into prechondrocytes. Together with SOX5 and SOX6, required for overt chondrogenesis when condensed prechondrocytes differentiate into early stage chondrocytes, the second step in chondrogenesis. Later, required to direct hypertrophic maturation and block osteoblast differentiation of growth plate chondrocytes: maintains chondrocyte columnar proliferation, delays prehypertrophy and then prevents osteoblastic differentiation of chondrocytes. Also required for chondrocyte hypertrophy, both indirectly, by keeping the lineage fate of chondrocytes, and directly, by remaining present in upper hypertrophic cells. Low lipid levels are the main nutritional determinant for chondrogenic commitment of skeletal progenitor cells: when lipids levels are low, FOXO transcription factors promote expression of SOX9, which induces chondrogenic commitment and suppresses fatty acid oxidation. In addition to cartilage development, also acts as a regulator of proliferation and differentiation in epithelial stem/progenitor cells. In response to bone morphogenetic protein stimulus, phosphorylation is induced and then sumoylation, allowing cooperation with SNAI2 to trigger neural crest delamination. This is Transcription factor SOX-9 from Gallus gallus (Chicken).